The sequence spans 191 residues: uncharacterized protein (191 aa).

Residues 1 to 23 (MKKTMSAITAAAAVTSCFTGFGA) form the signal peptide.

This is an uncharacterized protein from Bacillus subtilis (strain 168).